A 4080-amino-acid chain; its full sequence is Hybrid PKS-NRPS synthetase poxE (4080 aa).

Residues 8-442 (REPIAIVGSG…GTNAHAIIEA (435 aa)) enclose the Ketosynthase family 3 (KS3) domain. Active-site for beta-ketoacyl synthase activity residues include cysteine 181, histidine 320, and histidine 362. The interval 554–878 (VFTGQGAQWA…QRGMNDVEAM (325 aa)) is malonyl-CoA:ACP transacylase (MAT) domain. Positions 944-1078 (HPILGTRCPD…GRLVITYGPV (135 aa)) are N-terminal hotdog fold. One can recognise a PKS/mFAS DH domain in the interval 944-1246 (HPILGTRCPD…AVPLEATNAD (303 aa)). The tract at residues 945–1243 (PILGTRCPDG…GIHAVPLEAT (299 aa)) is dehydratase (DH) domain. Histidine 976 (proton acceptor; for dehydratase activity) is an active-site residue. Residues 1093–1246 (MVDVPSERFY…AVPLEATNAD (154 aa)) form a C-terminal hotdog fold region. The active-site Proton donor; for dehydratase activity is the aspartate 1152. Positions 1400-1585 (HFSDYLASVV…GVDTFTSDAD (186 aa)) are methyltransferase (MT) domain. Positions 2118–2292 (TYWLVGLTGS…AGSVMNIGAI (175 aa)) are ketoreductase (KR)domain. Positions 2399–2478 (TTDEIYEVIK…TIGEIIKFVL (80 aa)) are peptidyl carrier protein. A Carrier 1 domain is found at 2405-2481 (EVIKECFIVK…EIIKFVLEKL (77 aa)). Serine 2441 is subject to O-(pantetheine 4'-phosphoryl)serine. Residues 2488 to 2569 (SLGLSPPTGA…AASPSIHTEE (82 aa)) form a disordered region. The segment covering 2511–2525 (VVVERRNVPRLEKKI) has biased composition (basic and acidic residues). Residues 2528–2545 (SAGSRTSSSVTGTSKSVS) are compositionally biased toward low complexity. Residues 2551 to 2565 (DTASSQTSEAASPSI) are compositionally biased toward polar residues. The condensation stretch occupies residues 2607 to 3036 (KEPLSFGQSR…DSKQPGGHVS (430 aa)). The tract at residues 3069–3478 (DMAKQYPQKL…DGRLRIEGRI (410 aa)) is adenylation. A Carrier 2 domain is found at 3593-3673 (AHLNEAQAQM…KMALLIKPQE (81 aa)). Residues 3598–3670 (AQAQMVQLWE…TLEKMALLIK (73 aa)) are thiolation. Serine 3633 is modified (O-(pantetheine 4'-phosphoryl)serine). Positions 3740-3959 (LTGATGFIGQ…DFVPVEQVVR (220 aa)) are reductase (RED) domain.

The protein in the C-terminal section; belongs to the NRP synthetase family.

It functions in the pathway secondary metabolite biosynthesis. Its function is as follows. Hybrid PKS-NRPS synthetase; part of the gene cluster that mediates the biosynthesis of oxaleimides, cytotoxic compounds containing an unusual disubstituted succinimide moiety. The first step of the pathway is provided by the HR-PKS poxF that serves in a new mode of collaborative biosynthesis with the PKS-NRPS poxE, by providing the olefin containing amino acid substrate via the synthesis of an ACP-bound dec-4-enoate. The cytochrome P450 monooxygenase poxM-catalyzed oxidation at the alpha-position creates the enzyme-bound 2-hydroxydec-4-enoyl-ACP thioester, which may be prone to spontaneous hydrolysis to yield 2-hydroxydec-4-enoic acid due to increased electrophilicity of the carbonyl. 2-hydroxydec-4-enoic acid can then be further oxidized by poxM to yield the alpha-ketoacid 2-oxodec-4-enoicacid, which is reductively aminated by the aminotransferase poxL to yield (S,E)-2-aminodec-4-enoic acid. The Hybrid PKS-NRPS synthetase poxE then performs condensation between the octaketide product of its PKS modules and the amino group of (S,E)-2-aminodec-4-enoic acid which is activated and incorporated by the adenylation domain. The resulting aminoacyl product can be cyclized by the Diels-Alderase PoxQ and reductively released by the reductive (R) domain of poxE to yield an aldehyde intermediate. The released aldehyde is then substrate for a Knoevenagel condensation by the hydrolyase poxO followed by an oxidation at the 5-position of the pyrrolidone ring. The presence of the olefin from the amino acid building block allows for migration of the substituted allyl group to occur. This allylic transposition reaction takes place in a conjugate addition, semipinacol-like fashion to yield a succinimide intermediate. Iterative two-electron oxidations of the C7 methyl of the succinimide intermediate to the carboxylic acid can be catalyzed by one of two remaining cytochrome P450 monooxygenasess poxC or poxD to yield oxaleimide A. Subsequent oxidation yields the maleimide scaffold oxaleimide I. Both oxaleimide A and oxaleimide I can undergo oxidative modifications in the decalin ring to yield the series of products oxaleimides B to H. In Penicillium oxalicum (strain 114-2 / CGMCC 5302) (Penicillium decumbens), this protein is Hybrid PKS-NRPS synthetase poxE.